A 597-amino-acid polypeptide reads, in one-letter code: Elongation factor 4 (597 aa).

The 183-residue stretch at 2–184 (DHIRNFSIIA…ALVAKVPPPK (183 aa)) folds into the tr-type G domain. GTP is bound by residues 14-19 (DHGKST) and 131-134 (NKID).

Belongs to the TRAFAC class translation factor GTPase superfamily. Classic translation factor GTPase family. LepA subfamily.

The protein localises to the cell inner membrane. It carries out the reaction GTP + H2O = GDP + phosphate + H(+). Functionally, required for accurate and efficient protein synthesis under certain stress conditions. May act as a fidelity factor of the translation reaction, by catalyzing a one-codon backward translocation of tRNAs on improperly translocated ribosomes. Back-translocation proceeds from a post-translocation (POST) complex to a pre-translocation (PRE) complex, thus giving elongation factor G a second chance to translocate the tRNAs correctly. Binds to ribosomes in a GTP-dependent manner. This is Elongation factor 4 from Paraburkholderia xenovorans (strain LB400).